Reading from the N-terminus, the 357-residue chain is 3-isopropylmalate dehydrogenase (357 aa).

Residues Arg97, Arg107, Arg135, and Asp224 each coordinate substrate. 3 residues coordinate Mg(2+): Asp224, Asp248, and Asp252. Residue 282–294 coordinates NAD(+); the sequence is GSAPDIAGKNIAN.

The protein belongs to the isocitrate and isopropylmalate dehydrogenases family. LeuB type 1 subfamily. Homodimer. Requires Mg(2+) as cofactor. Mn(2+) is required as a cofactor.

The protein resides in the cytoplasm. It catalyses the reaction (2R,3S)-3-isopropylmalate + NAD(+) = 4-methyl-2-oxopentanoate + CO2 + NADH. The protein operates within amino-acid biosynthesis; L-leucine biosynthesis; L-leucine from 3-methyl-2-oxobutanoate: step 3/4. Functionally, catalyzes the oxidation of 3-carboxy-2-hydroxy-4-methylpentanoate (3-isopropylmalate) to 3-carboxy-4-methyl-2-oxopentanoate. The product decarboxylates to 4-methyl-2 oxopentanoate. In Prochlorococcus marinus subsp. pastoris (strain CCMP1986 / NIES-2087 / MED4), this protein is 3-isopropylmalate dehydrogenase.